The chain runs to 121 residues: C-X-C motif chemokine 11-6 (121 aa).

A signal peptide spans Met1–Gly20. 2 disulfides stabilise this stretch: Cys29-Cys56 and Cys31-Cys73. The interval Gln95–Lys121 is disordered. Low complexity predominate over residues Ser100–Ser115.

This sequence belongs to the intercrine alpha (chemokine CxC) family.

The protein resides in the secreted. Its function is as follows. Ligand for cxcr3.2. Chemotactic for macrophages. The sequence is that of C-X-C motif chemokine 11-6 from Danio rerio (Zebrafish).